A 211-amino-acid polypeptide reads, in one-letter code: Large ribosomal subunit protein uL4 (211 aa).

The span at Gln-41–Thr-53 shows a compositional bias: polar residues. The segment at Gln-41 to Ile-78 is disordered. Positions Gly-60–Gly-71 are enriched in basic residues.

Belongs to the universal ribosomal protein uL4 family. In terms of assembly, part of the 50S ribosomal subunit.

One of the primary rRNA binding proteins, this protein initially binds near the 5'-end of the 23S rRNA. It is important during the early stages of 50S assembly. It makes multiple contacts with different domains of the 23S rRNA in the assembled 50S subunit and ribosome. In terms of biological role, forms part of the polypeptide exit tunnel. In Prochlorococcus marinus (strain MIT 9313), this protein is Large ribosomal subunit protein uL4.